The chain runs to 108 residues: Integration host factor subunit alpha (108 aa).

This sequence belongs to the bacterial histone-like protein family. Heterodimer of an alpha and a beta chain.

Functionally, this protein is one of the two subunits of integration host factor, a specific DNA-binding protein that functions in genetic recombination as well as in transcriptional and translational control. This Bartonella henselae (strain ATCC 49882 / DSM 28221 / CCUG 30454 / Houston 1) (Rochalimaea henselae) protein is Integration host factor subunit alpha.